Here is a 373-residue protein sequence, read N- to C-terminus: Quinolinate synthase (373 aa).

2 residues coordinate iminosuccinate: histidine 46 and serine 63. Cysteine 109 provides a ligand contact to [4Fe-4S] cluster. Residues 142 to 144 (YMN) and serine 163 each bind iminosuccinate. Cysteine 232 contributes to the [4Fe-4S] cluster binding site. Iminosuccinate-binding positions include 258–260 (HPE) and threonine 275. Cysteine 324 contributes to the [4Fe-4S] cluster binding site.

Belongs to the quinolinate synthase family. Type 3 subfamily. The cofactor is [4Fe-4S] cluster.

Its subcellular location is the cytoplasm. It carries out the reaction iminosuccinate + dihydroxyacetone phosphate = quinolinate + phosphate + 2 H2O + H(+). The protein operates within cofactor biosynthesis; NAD(+) biosynthesis; quinolinate from iminoaspartate: step 1/1. In terms of biological role, catalyzes the condensation of iminoaspartate with dihydroxyacetone phosphate to form quinolinate. The chain is Quinolinate synthase from Acidobacterium capsulatum (strain ATCC 51196 / DSM 11244 / BCRC 80197 / JCM 7670 / NBRC 15755 / NCIMB 13165 / 161).